We begin with the raw amino-acid sequence, 704 residues long: Glycine--tRNA ligase beta subunit (704 aa).

It belongs to the class-II aminoacyl-tRNA synthetase family. As to quaternary structure, tetramer of two alpha and two beta subunits.

The protein localises to the cytoplasm. The catalysed reaction is tRNA(Gly) + glycine + ATP = glycyl-tRNA(Gly) + AMP + diphosphate. The protein is Glycine--tRNA ligase beta subunit of Rhizobium johnstonii (strain DSM 114642 / LMG 32736 / 3841) (Rhizobium leguminosarum bv. viciae).